A 187-amino-acid chain; its full sequence is dTTP/UTP pyrophosphatase (187 aa).

Aspartate 64 (proton acceptor) is an active-site residue.

It belongs to the Maf family. YhdE subfamily. Requires a divalent metal cation as cofactor.

It localises to the cytoplasm. The catalysed reaction is dTTP + H2O = dTMP + diphosphate + H(+). It catalyses the reaction UTP + H2O = UMP + diphosphate + H(+). In terms of biological role, nucleoside triphosphate pyrophosphatase that hydrolyzes dTTP and UTP. May have a dual role in cell division arrest and in preventing the incorporation of modified nucleotides into cellular nucleic acids. The sequence is that of dTTP/UTP pyrophosphatase from Leptospira interrogans serogroup Icterohaemorrhagiae serovar Lai (strain 56601).